The sequence spans 352 residues: Glycogen synthase kinase 3 (352 aa).

A Protein kinase domain is found at 20–310 (YTVERVAGQG…PLDALCHPFF (291 aa)). ATP contacts are provided by residues 26 to 34 (AGQGTFGTV) and Lys-49. Residue Asp-152 is the Proton acceptor of the active site.

Belongs to the protein kinase superfamily. CMGC Ser/Thr protein kinase family. GSK-3 subfamily. Inhibited by cyclin kinase 2 (CDK2) inhibitors, including GW8510.

It carries out the reaction L-seryl-[tau protein] + ATP = O-phospho-L-seryl-[tau protein] + ADP + H(+). The enzyme catalyses L-threonyl-[tau protein] + ATP = O-phospho-L-threonyl-[tau protein] + ADP + H(+). The chain is Glycogen synthase kinase 3 from Trypanosoma brucei brucei (strain 927/4 GUTat10.1).